Here is a 411-residue protein sequence, read N- to C-terminus: MISKLKMPQPSVNIGMVGHVDHGKSTLTLALTGTKTDTHSEEIKRGISIKLGYADTPIYRCYDSSGNVHYTREKGENCDLERVISIVDAPGHETLMATMLSGSALMNGALLVIAANEHCPQPQTREHLTALEIMGIKNIIIVQNKIDLVTRERAIESYREIKNFVKGSIAENAPIIPVSAYHSTNIDALFEAIEKYIPSPKFNENDDPIMYIARSFDINRPGTPVSELKGGVIGGSLTQGEFALGDEIEIVPGIQTTKGNKTVWNNVTTEVVSLMAGKYSYDRIRPGGLAAIGTKLDPFLTKGDAFTGRIAGHVGKVPPVAFSMRLESHLLKRVVGSDQELNVEPIRPKETLMFTVATANTVGVVNAMKGSEIEVSLKYPVAAFNGMRVAIGRRVMNRWRLIGYGIIQSLE.

Positions 9–201 (QPSVNIGMVG…AIEKYIPSPK (193 aa)) constitute a tr-type G domain. Residues 18–25 (GHVDHGKS) form a G1 region. Mg(2+)-binding residues include Asp-21, Ser-25, Gly-46, and Ser-48. 21-26 (DHGKST) serves as a coordination point for GTP. The interval 46-50 (GISIK) is G2. The tract at residues 88 to 91 (DAPG) is G3. GTP is bound by residues 144–147 (NKID) and 179–181 (SAY). Residues 144–147 (NKID) are G4. Positions 179–181 (SAY) are G5.

Belongs to the TRAFAC class translation factor GTPase superfamily. Classic translation factor GTPase family. EIF2G subfamily. As to quaternary structure, heterotrimer composed of an alpha, a beta and a gamma chain. It depends on Mg(2+) as a cofactor.

The catalysed reaction is GTP + H2O = GDP + phosphate + H(+). Its function is as follows. eIF-2 functions in the early steps of protein synthesis by forming a ternary complex with GTP and initiator tRNA. This Thermoplasma acidophilum (strain ATCC 25905 / DSM 1728 / JCM 9062 / NBRC 15155 / AMRC-C165) protein is Translation initiation factor 2 subunit gamma.